The sequence spans 925 residues: Calpain-B (925 aa).

Residues 259 to 558 (MFEDPDFPAT…FDRVEICNLS (300 aa)) form the Calpain catalytic domain. Active-site residues include C314, H470, and N498. The segment at 559-728 (PDSLTEDQQH…TRNNMEENDD (170 aa)) is domain III. A disordered region spans residues 723-753 (MEENDDEVGFGETDDRIAPSLPPPTPKEEDD). Residues 729–748 (EVGFGETDDRIAPSLPPPTP) form a linker region. A domain IV region spans residues 749–925 (KEEDDPQRIA…DDWLERTIYS (177 aa)). EF-hand domains lie at 796-831 (FSKDAVRSMVAMLDKDRSGRLGFEEFEALLTDIAKW) and 826-861 (TDIAKWRAVFKLYDTRRTGSIDGFHLRGALNSAGYH). Ca(2+) is bound by residues D809, D811, S813, R815, E820, D839, T843, S845, and H850.

This sequence belongs to the peptidase C2 family. Post-translationally, undergoes calcium-dependent autolytic cleavage between Asn-74 and Ala-75 and between Gln-224 and Asn-225 to produce two major products, calpain B catalytic subunit 1 and calpain B catalytic subunit 2. This autolysis is necessary for activation of the protein. In terms of tissue distribution, strongly expressed in follicular and border cells of the oocyte. Ubiquitously expressed in early embryos. Localized to the trachea and their orifices, and to the larynx of late embryos. Restricted to the salivary gland in third instar larvae.

The protein resides in the cytoplasm. It is found in the membrane. Activated by millimolar concentrations of calcium. Its function is as follows. Calcium-regulated non-lysosomal thiol-protease. The polypeptide is Calpain-B (Drosophila melanogaster (Fruit fly)).